The primary structure comprises 557 residues: DNA ligase B (557 aa).

Lysine 125 acts as the N6-AMP-lysine intermediate in catalysis.

The protein belongs to the NAD-dependent DNA ligase family. LigB subfamily.

The enzyme catalyses NAD(+) + (deoxyribonucleotide)n-3'-hydroxyl + 5'-phospho-(deoxyribonucleotide)m = (deoxyribonucleotide)n+m + AMP + beta-nicotinamide D-nucleotide.. Catalyzes the formation of phosphodiester linkages between 5'-phosphoryl and 3'-hydroxyl groups in double-stranded DNA using NAD as a coenzyme and as the energy source for the reaction. The sequence is that of DNA ligase B from Pseudomonas entomophila (strain L48).